Reading from the N-terminus, the 488-residue chain is Auxin transporter-like protein 1 (488 aa).

Positions 1 to 36 (MSGEKQAEESIVVSGEDEVAGRKVEDSAAEEDIDGN) are disordered. Topologically, residues 1 to 64 (MSGEKQAEES…DAWFSCASNQ (64 aa)) are cytoplasmic. The chain crosses the membrane as a helical span at residues 65-82 (VAQVLLTLPYSFSQLGML). Residues 83-84 (SG) lie on the Extracellular side of the membrane. Residues 85–105 (ILLQIFYGLMGSWTAYLISVL) form a helical membrane-spanning segment. The Cytoplasmic segment spans residues 106–141 (YVEYRARMEKQEAKSFKNHVIQWFEVLDGLLGPYWK). The helical transmembrane segment at 142–162 (AAGLAFNCTFLLFGSVIQLIA) threads the bilayer. Residues 163-178 (CASNIYYINDRLDKRT) are Extracellular-facing. A helical membrane pass occupies residues 179 to 199 (WTYIFGACCATTVFIPSFHNY). Topologically, residues 200–202 (RIW) are cytoplasmic. A helical membrane pass occupies residues 203–223 (SFLGLGMTTYTAWYLTIASFL). At 224 to 238 (HGQAEGVTHSGPTKL) the chain is on the extracellular side. Residues 239 to 259 (VLYFTGATNILYTFGGHAVTV) traverse the membrane as a helical segment. At 260 to 273 (EIMHAMWKPRKFKS) the chain is on the cytoplasmic side. The chain crosses the membrane as a helical span at residues 274-294 (IYLMATLYVFTLTLPSASAVY). Residues 295 to 320 (WAFGDQLLNHSNAFSLLPKTRFRDTA) are Extracellular-facing. N-linked (GlcNAc...) asparagine glycosylation occurs at asparagine 303. Residues 321–341 (VILMLIHQFITFGFACTPLYF) form a helical membrane-spanning segment. Over 342-362 (VWEKAIGMHHTKSLCLRALVR) the chain is Cytoplasmic. Residues 363 to 383 (LPVVVPIWFLAIIFPFFGPIN) form a helical membrane-spanning segment. Residue serine 384 is a topological domain, extracellular. The helical transmembrane segment at 385 to 405 (AVGALLVTFTVYIIPALAHML) threads the bilayer. At 406–427 (TYRTASARRNAAEKPPFFIPSW) the chain is on the cytoplasmic side. A helical membrane pass occupies residues 428 to 448 (AGVYVINAFIVVWVLVLGFGF). The Extracellular segment spans residues 449 to 488 (GGWASMTNFIRQIDTFGLFAKCYQCKPPPAPIAAGAHHRR).

It belongs to the amino acid/polyamine transporter 2 family. Amino acid/auxin permease (AAAP) (TC 2.A.18.1) subfamily.

The protein resides in the cell membrane. Its function is as follows. Carrier protein involved in proton-driven auxin influx. Mediates the formation of auxin gradient from developing leaves (site of auxin biosynthesis) to tips by contributing to the loading of auxin in vascular tissues and facilitating acropetal (base to tip) auxin transport within inner tissues of the root apex, and basipetal (tip to base) auxin transport within outer tissues of the root apex. The sequence is that of Auxin transporter-like protein 1 (LAX1) from Arabidopsis thaliana (Mouse-ear cress).